The primary structure comprises 469 residues: Glutamine synthetase (469 aa).

The GS beta-grasp domain occupies 14 to 99; the sequence is NDVKFVDLRF…VCDILDPVSG (86 aa). Residues 106–469 form the GS catalytic domain; sequence RRGTAKKAEA…PVEYDMYYSA (364 aa). Mg(2+) contacts are provided by glutamate 131 and glutamate 133. Glutamate 209 lines the ATP pocket. The Mg(2+) site is built by glutamate 214 and aspartate 221. L-glutamate is bound by residues 265 to 266 and glycine 266; that span reads NG. Histidine 270 lines the Mg(2+) pocket. Residues 272–274 and serine 274 contribute to the ATP site; that span reads HQS. L-glutamate-binding residues include arginine 322, glutamate 328, and arginine 340. ATP is bound by residues arginine 340, arginine 345, and lysine 353. Glutamate 358 provides a ligand contact to Mg(2+). Position 360 (arginine 360) interacts with L-glutamate. O-AMP-tyrosine is present on tyrosine 398.

This sequence belongs to the glutamine synthetase family. In terms of assembly, oligomer of 12 subunits arranged in the form of two hexameric ring. Mg(2+) is required as a cofactor.

The protein localises to the cytoplasm. The catalysed reaction is L-glutamate + NH4(+) + ATP = L-glutamine + ADP + phosphate + H(+). The activity of this enzyme could be controlled by adenylation under conditions of abundant glutamine. In terms of biological role, catalyzes the ATP-dependent biosynthesis of glutamine from glutamate and ammonia. The protein is Glutamine synthetase of Rhizobium leguminosarum bv. viciae.